Here is a 458-residue protein sequence, read N- to C-terminus: 3-isopropylmalate dehydratase large subunit (458 aa).

The [4Fe-4S] cluster site is built by Cys-337, Cys-397, and Cys-400.

This sequence belongs to the aconitase/IPM isomerase family. LeuC type 1 subfamily. Heterodimer of LeuC and LeuD. [4Fe-4S] cluster serves as cofactor.

The enzyme catalyses (2R,3S)-3-isopropylmalate = (2S)-2-isopropylmalate. The protein operates within amino-acid biosynthesis; L-leucine biosynthesis; L-leucine from 3-methyl-2-oxobutanoate: step 2/4. Catalyzes the isomerization between 2-isopropylmalate and 3-isopropylmalate, via the formation of 2-isopropylmaleate. The protein is 3-isopropylmalate dehydratase large subunit of Leuconostoc mesenteroides subsp. mesenteroides (strain ATCC 8293 / DSM 20343 / BCRC 11652 / CCM 1803 / JCM 6124 / NCDO 523 / NBRC 100496 / NCIMB 8023 / NCTC 12954 / NRRL B-1118 / 37Y).